The primary structure comprises 186 residues: Elongation factor P (186 aa).

Lys-33 is subject to N6-(3,6-diaminohexanoyl)-5-hydroxylysine.

The protein belongs to the elongation factor P family. Post-translationally, may be beta-lysylated on the epsilon-amino group of Lys-33 by the combined action of EpmA and EpmB, and then hydroxylated on the C5 position of the same residue by EpmC (if this protein is present). Lysylation is critical for the stimulatory effect of EF-P on peptide-bond formation. The lysylation moiety may extend toward the peptidyltransferase center and stabilize the terminal 3-CCA end of the tRNA. Hydroxylation of the C5 position on Lys-33 may allow additional potential stabilizing hydrogen-bond interactions with the P-tRNA.

It localises to the cytoplasm. Its pathway is protein biosynthesis; polypeptide chain elongation. Its function is as follows. Involved in peptide bond synthesis. Alleviates ribosome stalling that occurs when 3 or more consecutive Pro residues or the sequence PPG is present in a protein, possibly by augmenting the peptidyl transferase activity of the ribosome. Modification of Lys-33 is required for alleviation. This Acidithiobacillus ferrooxidans (strain ATCC 23270 / DSM 14882 / CIP 104768 / NCIMB 8455) (Ferrobacillus ferrooxidans (strain ATCC 23270)) protein is Elongation factor P.